A 362-amino-acid chain; its full sequence is Chorismate synthase (362 aa).

NADP(+) is bound at residue arginine 48. FMN-binding positions include 131–133 (RAS), 243–244 (NA), glycine 288, 303–307 (KPTSS), and arginine 329.

This sequence belongs to the chorismate synthase family. In terms of assembly, homotetramer. Requires FMNH2 as cofactor.

It carries out the reaction 5-O-(1-carboxyvinyl)-3-phosphoshikimate = chorismate + phosphate. It participates in metabolic intermediate biosynthesis; chorismate biosynthesis; chorismate from D-erythrose 4-phosphate and phosphoenolpyruvate: step 7/7. Its function is as follows. Catalyzes the anti-1,4-elimination of the C-3 phosphate and the C-6 proR hydrogen from 5-enolpyruvylshikimate-3-phosphate (EPSP) to yield chorismate, which is the branch point compound that serves as the starting substrate for the three terminal pathways of aromatic amino acid biosynthesis. This reaction introduces a second double bond into the aromatic ring system. This chain is Chorismate synthase, found in Bartonella tribocorum (strain CIP 105476 / IBS 506).